Reading from the N-terminus, the 417-residue chain is MAKEGVEKAEETEQMIEKETSKEPAEGGDGSHRLGDAQEMRAVVLAGFGGLNKLRLSRKAMPEPQDGELKIRVKACGLNFIDLMVRQGNIDNPPKTPLVPGFECSGIVEALGDSVKGYEIGDRVMAFVNYNAWAEVVCTPVEFVYKIPDDMSFSEAAAFPMNFVTAYTMLFEIANLREGMSVLVHSAGGGVGQAVAQLCSTVPNVTVFGTASTFKHEAIKDSVTHLFDRNADYVQEVKRISAEGVDIVLDCLCGDNTGKGLSLLKPLGTYILYGSSNMVTGETKSFFSFAKSWWQVEKVNPIKLYEENKVIAGFSLLNLLFKQGRSGLIRGVVEKLIGLYNQKKIKPVVDSLWALEEVKEAMQRIHDRGNIGKLILDVEKTPTPLMANDSTETSEAGEEEEDHEGDSENKERMPFIQ.

2 disordered regions span residues methionine 1–arginine 33 and proline 382–glutamine 417. Serine 390 carries the post-translational modification Phosphoserine. Phosphothreonine occurs at positions 391 and 393. Serine 394 bears the Phosphoserine mark. A compositionally biased stretch (acidic residues) spans glutamate 395 to glycine 405. Residues aspartate 406–glutamine 417 are compositionally biased toward basic and acidic residues.

Belongs to the zinc-containing alcohol dehydrogenase family. Quinone oxidoreductase subfamily.

This Mus musculus (Mouse) protein is Synaptic vesicle membrane protein VAT-1 homolog-like (Vat1l).